Reading from the N-terminus, the 222-residue chain is Ribosomal RNA small subunit methyltransferase G (222 aa).

S-adenosyl-L-methionine is bound by residues glycine 82, leucine 87, 132 to 133, and arginine 150; that span reads AE.

This sequence belongs to the methyltransferase superfamily. RNA methyltransferase RsmG family.

The protein resides in the cytoplasm. Its function is as follows. Specifically methylates the N7 position of guanine in position 518 of 16S rRNA. This chain is Ribosomal RNA small subunit methyltransferase G, found in Corynebacterium jeikeium (strain K411).